We begin with the raw amino-acid sequence, 300 residues long: tRNA dimethylallyltransferase (300 aa).

9–16 (GPTASGKT) contacts ATP. 11–16 (TASGKT) contributes to the substrate binding site. The interval 34-37 (DSQQ) is interaction with substrate tRNA.

The protein belongs to the IPP transferase family. As to quaternary structure, monomer. Requires Mg(2+) as cofactor.

The catalysed reaction is adenosine(37) in tRNA + dimethylallyl diphosphate = N(6)-dimethylallyladenosine(37) in tRNA + diphosphate. Catalyzes the transfer of a dimethylallyl group onto the adenine at position 37 in tRNAs that read codons beginning with uridine, leading to the formation of N6-(dimethylallyl)adenosine (i(6)A). This is tRNA dimethylallyltransferase from Anaeromyxobacter sp. (strain Fw109-5).